The chain runs to 184 residues: UPF0397 protein SA2477 (184 aa).

5 helical membrane-spanning segments follow: residues 11–31 (VVAI…VVIP), 44–64 (AFLA…TGLV), 77–97 (AWWS…WIGL), 111–131 (MIYF…LIAP), and 148–168 (QGVI…TILL).

This sequence belongs to the UPF0397 family.

Its subcellular location is the cell membrane. This is UPF0397 protein SA2477 from Staphylococcus aureus (strain N315).